The sequence spans 251 residues: Adenosine 5'-phosphosulfate reductase (251 aa).

[4Fe-4S] cluster contacts are provided by cysteine 121, cysteine 122, cysteine 204, and cysteine 207. Cysteine 232 acts as the Nucleophile; cysteine thiosulfonate intermediate in catalysis.

Belongs to the PAPS reductase family. CysH subfamily. It depends on [4Fe-4S] cluster as a cofactor.

The protein localises to the cytoplasm. The catalysed reaction is [thioredoxin]-disulfide + sulfite + AMP + 2 H(+) = adenosine 5'-phosphosulfate + [thioredoxin]-dithiol. The protein operates within sulfur metabolism; hydrogen sulfide biosynthesis; sulfite from sulfate. Its function is as follows. Catalyzes the formation of sulfite from adenosine 5'-phosphosulfate (APS) using thioredoxin as an electron donor. This Sinorhizobium fredii (strain USDA 257) protein is Adenosine 5'-phosphosulfate reductase.